The chain runs to 423 residues: GPI mannosyltransferase 2 (423 aa).

9 consecutive transmembrane segments (helical) span residues 7–27, 102–122, 128–148, 151–171, 191–211, 228–248, 298–318, 333–353, and 400–420; these read LTLI…ILSG, VILG…LVLY, IFNP…PTAT, APYT…LLSI, TGIF…AHIF, FLSA…TETV, LAMP…SHLV, PPPI…LLLF, and YWIG…AGHY.

It belongs to the PIGV family.

The protein localises to the endoplasmic reticulum membrane. The protein operates within glycolipid biosynthesis; glycosylphosphatidylinositol-anchor biosynthesis. Functionally, mannosyltransferase involved in glycosylphosphatidylinositol-anchor biosynthesis. Transfers the second mannose to the glycosylphosphatidylinositol during GPI precursor assembly. The polypeptide is GPI mannosyltransferase 2 (GPI18) (Cryptococcus neoformans var. neoformans serotype D (strain JEC21 / ATCC MYA-565) (Filobasidiella neoformans)).